The sequence spans 88 residues: Apolipoprotein C-I (88 aa).

The first 26 residues, 1–26 (MRLILSLPVLAVVLAMVLEGPAPAQA), serve as a signal peptide directing secretion.

This sequence belongs to the apolipoprotein C1 family.

It is found in the secreted. Its function is as follows. Inhibitor of lipoprotein binding to the low density lipoprotein (LDL) receptor, LDL receptor-related protein, and very low density lipoprotein (VLDL) receptor. Associates with high density lipoproteins (HDL) and the triacylglycerol-rich lipoproteins in the plasma and makes up about 10% of the protein of the VLDL and 2% of that of HDL. Appears to interfere directly with fatty acid uptake and is also the major plasma inhibitor of cholesteryl ester transfer protein (CETP). Binds free fatty acids and reduces their intracellular esterification. Modulates the interaction of APOE with beta-migrating VLDL and inhibits binding of beta-VLDL to the LDL receptor-related protein. In Cynopterus brachyotis (Lesser short-nosed fruit bat), this protein is Apolipoprotein C-I (APOC1).